We begin with the raw amino-acid sequence, 316 residues long: 4-hydroxy-3-methylbut-2-enyl diphosphate reductase (316 aa).

Cys12 serves as a coordination point for [4Fe-4S] cluster. (2E)-4-hydroxy-3-methylbut-2-enyl diphosphate-binding residues include His41 and His74. Positions 41 and 74 each coordinate dimethylallyl diphosphate. Isopentenyl diphosphate contacts are provided by His41 and His74. Cys96 contributes to the [4Fe-4S] cluster binding site. His124 is a (2E)-4-hydroxy-3-methylbut-2-enyl diphosphate binding site. His124 contributes to the dimethylallyl diphosphate binding site. His124 serves as a coordination point for isopentenyl diphosphate. Glu126 serves as the catalytic Proton donor. Thr169 serves as a coordination point for (2E)-4-hydroxy-3-methylbut-2-enyl diphosphate. Residue Cys199 coordinates [4Fe-4S] cluster. 4 residues coordinate (2E)-4-hydroxy-3-methylbut-2-enyl diphosphate: Ser227, Ser228, Asn229, and Ser271. Positions 227, 228, 229, and 271 each coordinate dimethylallyl diphosphate. Residues Ser227, Ser228, Asn229, and Ser271 each coordinate isopentenyl diphosphate.

It belongs to the IspH family. [4Fe-4S] cluster is required as a cofactor.

It catalyses the reaction isopentenyl diphosphate + 2 oxidized [2Fe-2S]-[ferredoxin] + H2O = (2E)-4-hydroxy-3-methylbut-2-enyl diphosphate + 2 reduced [2Fe-2S]-[ferredoxin] + 2 H(+). The enzyme catalyses dimethylallyl diphosphate + 2 oxidized [2Fe-2S]-[ferredoxin] + H2O = (2E)-4-hydroxy-3-methylbut-2-enyl diphosphate + 2 reduced [2Fe-2S]-[ferredoxin] + 2 H(+). The protein operates within isoprenoid biosynthesis; dimethylallyl diphosphate biosynthesis; dimethylallyl diphosphate from (2E)-4-hydroxy-3-methylbutenyl diphosphate: step 1/1. It functions in the pathway isoprenoid biosynthesis; isopentenyl diphosphate biosynthesis via DXP pathway; isopentenyl diphosphate from 1-deoxy-D-xylulose 5-phosphate: step 6/6. Functionally, catalyzes the conversion of 1-hydroxy-2-methyl-2-(E)-butenyl 4-diphosphate (HMBPP) into a mixture of isopentenyl diphosphate (IPP) and dimethylallyl diphosphate (DMAPP). Acts in the terminal step of the DOXP/MEP pathway for isoprenoid precursor biosynthesis. The protein is 4-hydroxy-3-methylbut-2-enyl diphosphate reductase of Xylella fastidiosa (strain M23).